Consider the following 338-residue polypeptide: Methionyl-tRNA formyltransferase (338 aa).

A (6S)-5,6,7,8-tetrahydrofolate-binding site is contributed by 110-113 (SLLP).

It belongs to the Fmt family.

It carries out the reaction L-methionyl-tRNA(fMet) + (6R)-10-formyltetrahydrofolate = N-formyl-L-methionyl-tRNA(fMet) + (6S)-5,6,7,8-tetrahydrofolate + H(+). Attaches a formyl group to the free amino group of methionyl-tRNA(fMet). The formyl group appears to play a dual role in the initiator identity of N-formylmethionyl-tRNA by promoting its recognition by IF2 and preventing the misappropriation of this tRNA by the elongation apparatus. The polypeptide is Methionyl-tRNA formyltransferase (Synechococcus sp. (strain CC9902)).